Here is a 2437-residue protein sequence, read N- to C-terminus: Polyprotein P1234 (2437 aa).

Residues 28–259 (EAQQVTPNDH…ESRRLLKSWH (232 aa)) enclose the Alphavirus-like MT domain. The nsP1 membrane-binding stretch occupies residues 244 to 263 (GSTLYIESRRLLKSWHLPSV). Residues Cys417 and Cys419 are each lipidated (S-palmitoyl cysteine; by host). One can recognise a (+)RNA virus helicase ATP-binding domain in the interval 691–843 (DLINPPFHEF…HNICTEVDHK (153 aa)). 722-729 (GVPGSGKS) contacts a ribonucleoside 5'-triphosphate. In terms of domain architecture, (+)RNA virus helicase C-terminal spans 844–992 (SISRRCTLPI…LEDWQREHDT (149 aa)). The 323-residue stretch at 1005–1327 (DVFQNKAKVC…GKLSSIYAGT (323 aa)) folds into the Peptidase C9 domain. The tract at residues 1006-1025 (VFQNKAKVCWAKCLVPVLET) is nucleolus localization signal. Residue Cys1014 is the For cysteine protease nsP2 activity of the active site. A Nuclear export signal motif is present at residues 1059-1068 (TKIYGVDLDS). His1084 acts as the For cysteine protease nsP2 activity in catalysis. Positions 1182–1186 (PRRKV) match the Nuclear localization signal motif. Positions 1335–1493 (APAYAVKRAD…QKIKTVLQNR (159 aa)) constitute a Macro domain. ADP-D-ribose-binding residues include Asp1344, Asn1358, Gly1366, Gly1446, Ile1447, and Phe1448. Zn(2+) contacts are provided by Cys1596, Cys1598, Cys1621, and Cys1639. Low complexity predominate over residues 1675-1684 (TSDSSSLSTF). The interval 1675-1729 (TSDSSSLSTFPDLESAEELDHDSQSVRPALNEPDDHQPTPTAELATHPVPPPRPN) is disordered. 2 consecutive short sequence motifs (FGDF; binding to host G3BP1) follow at residues 1792 to 1795 (FGAP) and 1804 to 1807 (FGDF). Residues 2191-2306 (DHVLETDIAS…HGVVSDKLMA (116 aa)) enclose the RdRp catalytic domain.

In terms of assembly, interacts with non-structural protein 3. Interacts with RNA-directed RNA polymerase nsP4. Interacts with protease nsP2. interacts with itself. As to quaternary structure, interacts with mRNA-capping enzyme nsP1. Interacts with host DDX1. Interacts with host DDX3. Interacts (via C-terminus) with host G3BP1; this interaction inhibits the formation of host stress granules on viral mRNAs and the nsp3-G3BP1 complexes bind viral RNAs and probably orchestrate the assembly of viral replication complexes. Interacts (via C-terminus) with host G3BP2; this interaction inhibits the formation of host stress granules on viral mRNAs and the nsp3-G3BP2 complexes bind viral RNAs and probably orchestrate the assembly of viral replication complexes. Interacts with mRNA-capping enzyme nsP1. Interacts with protease nsP2. interacts with itself. In terms of assembly, interacts with RNA-directed RNA polymerase nsP4. Interacts with mRNA-capping enzyme nsP1. Interacts with KPNA1/karyopherin-alpha1; this interaction probably allows the active transport of protease nsP2 into the host nucleus. Interacts with host POLR2A/RPB1; this interaction seems to induce the depletion of host POLR2A and may play a role in the transcriptional shutoff induced by protease nsP2. Interacts with host GTF2E2/TF2E2; this interaction seems to induce the depletion of host GTF2E2/TF2E2 and may play a role in the transcriptional shutoff induced by protease nsP2. It depends on Mg(2+) as a cofactor. Requires Mn(2+) as cofactor. In terms of processing, specific enzymatic cleavages in vivo yield mature proteins. The processing of the polyprotein is temporally regulated. In early stages (1.7 hpi), P1234 is first cleaved in trans through its nsP2 protease activity, releasing P123' and nsP4, which associate to form the early replication complex. At the same time, P1234 is also cut at the nsP1/nsP2 site early in infection but with lower efficiency. After replication of the viral minus-strand RNAs (4 hpi), the polyproteins are cut at the nsP1/nsP2 and nsP2/nsP3 sites very efficiently, preventing accumulation of P123' and P1234 and allowing the formation of the late replication complex. NsP3'/nsP4 site is not cleaved anymore and P34 is produced rather than nsP4. Specific enzymatic cleavages in vivo yield mature proteins. The processing of the polyprotein is temporally regulated. In early stages (1.7 hpi), P123 is cleaved at the nsP1/nsP2 site with low efficiency. After replication of the viral minus-strand RNAs (4 hpi), the polyproteins are cut at the nsP1/nsP2 and nsP2/nsP3 sites very efficiently, preventing accumulation of P123 and allowing the formation of the late replication complex. Post-translationally, specific enzymatic cleavages in vivo yield mature proteins. The processing of the polyprotein is temporally regulated. In early stages (1.7 hpi), P123' is cleaved at the nsP1/nsP2 site with low efficiency. After replication of the viral minus-strand RNAs (4 hpi), the polyproteins are cut at the nsP1/nsP2 and nsP2/nsP3 sites very efficiently, preventing accumulation of P123' and allowing the formation of the late replication complex. In terms of processing, palmitoylated by host palmitoyltransferases ZDHHC2 and ZDHHC19. Phosphorylated by host on serines and threonines. Post-translationally, ubiquitinated; targets the protein for rapid degradation via the ubiquitin system. Nsp4 is present in extremely low quantities due to low frequency of translation through the amber stop-codon and the degradation by the ubiquitin pathway.

Its subcellular location is the host cytoplasmic vesicle membrane. It localises to the host cell membrane. The protein resides in the host cell projection. It is found in the host filopodium. The protein localises to the host nucleus. Its subcellular location is the host cytoplasm. It catalyses the reaction GTP + S-adenosyl-L-methionine = N(7)-methyl-GTP + S-adenosyl-L-homocysteine. The enzyme catalyses N(7)-methyl-GTP + L-histidyl-[protein] = N(tele)-(N(7)-methylguanosine 5'-phospho)-L-histidyl-[protein] + diphosphate. The catalysed reaction is N(tele)-(N(7)-methylguanosine 5'-phospho)-L-histidyl-[protein] + a 5'-end diphospho-(purine-ribonucleoside) in mRNA + H(+) = a 5'-end (N(7)-methyl 5'-triphosphoguanosine)-(purine-ribonucleoside) in mRNA + L-histidyl-[protein]. It carries out the reaction a 5'-end triphospho-ribonucleoside in mRNA + H2O = a 5'-end diphospho-ribonucleoside in mRNA + phosphate + H(+). It catalyses the reaction a ribonucleoside 5'-triphosphate + H2O = a ribonucleoside 5'-diphosphate + phosphate + H(+). The enzyme catalyses ATP + H2O = ADP + phosphate + H(+). The catalysed reaction is RNA(n) + a ribonucleoside 5'-triphosphate = RNA(n+1) + diphosphate. It carries out the reaction RNA(n) + ATP = RNA(n)-3'-adenine ribonucleotide + diphosphate. It catalyses the reaction 4-O-(ADP-D-ribosyl)-L-aspartyl-[protein] + H2O = L-aspartyl-[protein] + ADP-D-ribose + H(+). The enzyme catalyses 5-O-(ADP-D-ribosyl)-L-glutamyl-[protein] + H2O = L-glutamyl-[protein] + ADP-D-ribose + H(+). The catalysed reaction is ADP-alpha-D-ribose 1''-phosphate + H2O = ADP-D-ribose + phosphate. In terms of biological role, inactive precursor of the viral replicase, which is activated by cleavages carried out by the viral protease nsP2. Functionally, the early replication complex formed by the polyprotein P123 and nsP4 synthesizes minus-strand RNAs. As soon P123 is cleaved into mature proteins, the plus-strand RNAs synthesis begins. Its function is as follows. The early replication complex formed by the polyprotein P123' and nsP4 synthesizes minus-strand RNAs. Polyprotein P123' is a short-lived polyprotein that accumulates during early stage of infection. As soon P123' is cleaved into mature proteins, the plus-strand RNAs synthesis begins. Cytoplasmic capping enzyme that catalyzes two virus-specific reactions: methyltransferase and nsP1 guanylyltransferase. mRNA-capping is necessary since all viral RNAs are synthesized in the cytoplasm, and host capping enzymes are restricted to the nucleus. The enzymatic reaction involves a covalent link between 7-methyl-GMP and nsP1, whereas eukaryotic capping enzymes form a covalent complex only with GMP. nsP1 capping consists in the following reactions: GTP is first methylated into 7-methyl-GMP and then is covalently linked to nsP1 to form the m7GMp-nsP1 complex from which 7-methyl-GMP complex is transferred to the mRNA to create the cap structure. NsP1 is needed for the initiation of the minus-strand RNAs synthesis. Probably serves as a membrane anchor for the replication complex composed of nsP1-nsP4. Palmitoylated nsP1 is remodeling host cell cytoskeleton, and induces filopodium-like structure formation at the surface of the host cell. In terms of biological role, multifunctional protein whose N-terminus is part of the RNA polymerase complex and displays NTPase, RNA triphosphatase and helicase activities. NTPase and RNA triphosphatase are involved in viral RNA capping and helicase keeps a check on the dsRNA replication intermediates. The C-terminus harbors a protease that specifically cleaves the polyproteins and releases the mature proteins. Required for the shutoff of minus-strand RNAs synthesis. Specifically inhibits the host IFN response by promoting the nuclear export of host STAT1. Induces host transcription shutoff by inducing rapid proteasome-dependent degradation of POLR2A, a catalytic subunit of the RNAPII complex. The resulting inhibition of cellular protein synthesis serves to ensure maximal viral gene expression and to evade host immune response. Functionally, seems to be essential for minus-strand RNAs and subgenomic 26S mRNAs synthesis. Displays mono-ADP-ribosylhydrolase activity. ADP-ribosylation is a post-translational modification that controls various processes of the host cell and the virus probably needs to revert it for optimal viral replication. Binds proteins of FXR family and sequesters them into the viral RNA replication complexes thereby inhibiting the formation of host stress granules on viral mRNAs. The nsp3'-FXR complexes bind viral RNAs and probably orchestrate the assembly of viral replication complexes, thanks to the ability of FXR family members to self-assemble and bind DNA. Its function is as follows. Seems to be essential for minus-strand RNAs and subgenomic 26S mRNAs synthesis. Displays mono-ADP-ribosylhydrolase activity. ADP-ribosylation is a post-translantional modification that controls various processes of the host cell and the virus probably needs to revert it for optimal viral replication. Binds proteins of G3BP family and sequesters them into the viral RNA replication complexes thereby inhibiting the formation of host stress granules on viral mRNAs. The nsp3-G3BP complexes bind viral RNAs and probably orchestrate the assembly of viral replication complexes, thanks to the ability of G3BP family members to self-assemble and bind DNA. RNA dependent RNA polymerase. Replicates genomic and antigenomic RNA by recognizing replications specific signals. The early replication complex formed by the polyprotein P123 and nsP4 synthesizes minus-strand RNAs. The late replication complex composed of fully processed nsP1-nsP4 is responsible for the production of genomic and subgenomic plus-strand RNAs. The core catalytic domain of nsP4 also possesses terminal adenylyltransferase (TATase) activity that is probably involved in maintenance and repair of the poly(A) tail, an element required for replication of the viral genome. This Aedes aegypti (Yellowfever mosquito) protein is Polyprotein P1234.